Reading from the N-terminus, the 469-residue chain is Glutamate--tRNA ligase (469 aa).

The 'HIGH' region motif lies at 9–19 (PSPTGYLHVGG). Positions 98, 100, 125, and 127 each coordinate Zn(2+). The 'KMSKS' region signature appears at 237 to 241 (KLSKR). K240 lines the ATP pocket.

This sequence belongs to the class-I aminoacyl-tRNA synthetase family. Glutamate--tRNA ligase type 1 subfamily. As to quaternary structure, monomer. The cofactor is Zn(2+).

It localises to the cytoplasm. The catalysed reaction is tRNA(Glu) + L-glutamate + ATP = L-glutamyl-tRNA(Glu) + AMP + diphosphate. In terms of biological role, catalyzes the attachment of glutamate to tRNA(Glu) in a two-step reaction: glutamate is first activated by ATP to form Glu-AMP and then transferred to the acceptor end of tRNA(Glu). The sequence is that of Glutamate--tRNA ligase from Serratia proteamaculans (strain 568).